A 188-amino-acid chain; its full sequence is Ribosome maturation factor RimM (188 aa).

The region spanning 103-177 is the PRC barrel domain; it reads EEGWYYADLI…RVVIDPPAGT (75 aa).

It belongs to the RimM family. As to quaternary structure, binds ribosomal protein uS19.

Its subcellular location is the cytoplasm. Its function is as follows. An accessory protein needed during the final step in the assembly of 30S ribosomal subunit, possibly for assembly of the head region. Essential for efficient processing of 16S rRNA. May be needed both before and after RbfA during the maturation of 16S rRNA. It has affinity for free ribosomal 30S subunits but not for 70S ribosomes. The chain is Ribosome maturation factor RimM from Parvibaculum lavamentivorans (strain DS-1 / DSM 13023 / NCIMB 13966).